A 704-amino-acid chain; its full sequence is CAP-Gly domain-containing linker protein 4 (704 aa).

3 ANK repeats span residues 65 to 101 (TSVS…NVND), 149 to 180 (TNMN…DVDA), and 186 to 215 (NFGT…NPAF). In terms of domain architecture, CAP-Gly 1 spans 303 to 345 (GTTEFASGQWAGIELDEPEGKNNGSVGRVQYFKCAPKYGIFAP). The segment at 353–479 (KDGRKTTTHT…SATSAANNSH (127 aa)) is disordered. Composition is skewed to low complexity over residues 360 to 371 (THTPSTRATPHA), 423 to 432 (SMSSSSSSSS), and 440 to 461 (PKKL…SLPS). Residues 504–546 (GTTNFAPGYWYGIELEKPHGKNDGSVGGVQYFSCSPRYGIFAP) form the CAP-Gly 2 domain. Phosphoserine is present on residues serine 556 and serine 608. The CAP-Gly 3 domain occupies 643 to 685 (GPTDFASGIWLGLELRSAKGKNDGAVGDKRYFTCKPNYGVLVR).

This chain is CAP-Gly domain-containing linker protein 4 (Clip4), found in Mus musculus (Mouse).